Reading from the N-terminus, the 291-residue chain is HTH-type transcriptional regulator DgcR (291 aa).

Residues 1–58 (MRLRHIEVFHAIYTTGSITNAAKALHVSQPSVSKVLSHAEMQLGFKLFERVKGRLIPT) enclose the HTH lysR-type domain. Residues 18-37 (ITNAAKALHVSQPSVSKVLS) constitute a DNA-binding region (H-T-H motif).

The protein belongs to the LysR transcriptional regulatory family.

Functionally, transcriptional regulator that positively regulates the expression of the D-Glu gene cluster (DGC). The cluster includes dgcN and dgcA, which are involved in a deamination-independent D-glutamate degradation pathway, dgcR itself, dgcT, dgcP and dgcH. Acts by binding the consensus sequence upstream of dgcR, dgcT, dgcP and dgcH. This is HTH-type transcriptional regulator DgcR from Pseudoalteromonas sp.